Consider the following 92-residue polypeptide: Putative membrane protein insertion efficiency factor (92 aa).

This sequence belongs to the UPF0161 family.

The protein resides in the cell inner membrane. Its function is as follows. Could be involved in insertion of integral membrane proteins into the membrane. The chain is Putative membrane protein insertion efficiency factor from Synechococcus sp. (strain CC9902).